We begin with the raw amino-acid sequence, 334 residues long: Protein-methionine-sulfoxide reductase catalytic subunit MsrP (334 aa).

A signal peptide (tat-type signal) is located at residues 1 to 44; the sequence is MKKNQFLKESDVTAESVFFMKRRQVLKALGISAAALSLPHAAHA. Mo-molybdopterin is bound by residues Asn-88, 91–92, Cys-146, Thr-181, Asn-233, Arg-238, and 249–251; these read YE and GIK.

This sequence belongs to the MsrP family. In terms of assembly, heterodimer of a catalytic subunit (MsrP) and a heme-binding subunit (MsrQ). Mo-molybdopterin serves as cofactor. In terms of processing, predicted to be exported by the Tat system. The position of the signal peptide cleavage has not been experimentally proven.

The protein localises to the periplasm. The catalysed reaction is L-methionyl-[protein] + a quinone + H2O = L-methionyl-(S)-S-oxide-[protein] + a quinol. It catalyses the reaction L-methionyl-[protein] + a quinone + H2O = L-methionyl-(R)-S-oxide-[protein] + a quinol. Part of the MsrPQ system that repairs oxidized periplasmic proteins containing methionine sulfoxide residues (Met-O), using respiratory chain electrons. Thus protects these proteins from oxidative-stress damage caused by reactive species of oxygen and chlorine generated by the host defense mechanisms. MsrPQ is essential for the maintenance of envelope integrity under bleach stress, rescuing a wide series of structurally unrelated periplasmic proteins from methionine oxidation, including the primary periplasmic chaperone SurA and the lipoprotein Pal. The catalytic subunit MsrP is non-stereospecific, being able to reduce both (R-) and (S-) diastereoisomers of methionine sulfoxide. The polypeptide is Protein-methionine-sulfoxide reductase catalytic subunit MsrP (Shigella boydii serotype 18 (strain CDC 3083-94 / BS512)).